The primary structure comprises 218 residues: Ribosomal RNA large subunit methyltransferase E (218 aa).

Residues Gly-64, Trp-66, Asp-92, Asp-108, and Asp-133 each coordinate S-adenosyl-L-methionine. Lys-173 acts as the Proton acceptor in catalysis.

It belongs to the class I-like SAM-binding methyltransferase superfamily. RNA methyltransferase RlmE family.

The protein localises to the cytoplasm. It carries out the reaction uridine(2552) in 23S rRNA + S-adenosyl-L-methionine = 2'-O-methyluridine(2552) in 23S rRNA + S-adenosyl-L-homocysteine + H(+). Specifically methylates the uridine in position 2552 of 23S rRNA at the 2'-O position of the ribose in the fully assembled 50S ribosomal subunit. The sequence is that of Ribosomal RNA large subunit methyltransferase E from Paracidovorax citrulli (strain AAC00-1) (Acidovorax citrulli).